A 348-amino-acid chain; its full sequence is Rhodopsin (348 aa).

An N-acetylmethionine modification is found at methionine 1. Topologically, residues 1–36 (MNGTEGPNFYVPFSNKTGVVRSPFEEPQYYLAEPWQ) are extracellular. Residues asparagine 2 and asparagine 15 are each glycosylated (N-linked (GlcNAc...) asparagine). The chain crosses the membrane as a helical span at residues 37-61 (FSCLAAYMFMLIVLGFPINFLTLYV). At 62–73 (TIQHKKLRTPLN) the chain is on the cytoplasmic side. The helical transmembrane segment at 74–96 (YILLNLAIADLFMVFGGFTTTLY) threads the bilayer. Residues 97–110 (TSLHGYFVFGPTGC) are Extracellular-facing. Cysteines 110 and 187 form a disulfide. A helical transmembrane segment spans residues 111-133 (DLEGFFATLGGEIALWSLVVLAI). Residues 134-136 (ERY) carry the 'Ionic lock' involved in activated form stabilization motif. Over 134–152 (ERYIVVCKPMSNFRFGENH) the chain is Cytoplasmic. The chain crosses the membrane as a helical span at residues 153 to 173 (AIMGVAFTWVMALACAAPPLV). At 174–202 (GWSRYIPEGMQCSCGIDYYTLKPEVNNES) the chain is on the extracellular side. Position 201 (glutamate 201) interacts with Zn(2+). A helical transmembrane segment spans residues 203–224 (FVIYMFVVHFTIPMVVIFFCYG). Over 225 to 252 (QLVFTVKEAAAQQQESATTQKAEKEVTR) the chain is Cytoplasmic. A helical membrane pass occupies residues 253-274 (MVIIMVIAFLICWLPYAGVAFY). At 275 to 286 (IFTHQGSNFGPI) the chain is on the extracellular side. Glutamine 279 serves as a coordination point for Zn(2+). Residues 287-308 (LMTLPAFFAKTSAVYNPVIYIM) form a helical membrane-spanning segment. N6-(retinylidene)lysine is present on lysine 296. Residues 309–348 (LNKQFRTCMLTTLCCGKIPLGDDEASATASKTETSQVAPA) are Cytoplasmic-facing. 2 S-palmitoyl cysteine lipidation sites follow: cysteine 322 and cysteine 323. The segment at 330–348 (DDEASATASKTETSQVAPA) is interaction with SAG. Serine 334 is subject to Phosphoserine. Threonine 336 carries the post-translational modification Phosphothreonine. Serine 338 bears the Phosphoserine mark. Residues threonine 340 and threonine 342 each carry the phosphothreonine modification. Phosphoserine is present on serine 343.

Belongs to the G-protein coupled receptor 1 family. Opsin subfamily. In terms of assembly, homodimer. May form a complex composed of RHO, GRK1 and RCVRN in a Ca(2+)-dependent manner; RCVRN prevents the interaction between GRK1 and RHO. Interacts with GRK1. Interacts (phosphorylated form) with SAG. Interacts with GNAT1. Interacts with GNAT3. SAG and G-proteins compete for a common binding site. Interacts with PRCD; the interaction promotes PRCD stability. Forms a complex with ASAP1 and ARF4. Forms a complex with ASAP1, RAB11A, Rabin8/RAB3IP, ARF4 and RAB11FIP3; the complex regulates Golgi-to-cilia rhodopsin/RHO transport in photoreceptors. Post-translationally, phosphorylated on some or all of the serine and threonine residues present in the C-terminal region. In terms of processing, contains one covalently linked retinal chromophore. Upon light absorption, the covalently bound 11-cis-retinal is converted to all-trans-retinal. After hydrolysis of the Schiff base and release of the covalently bound all-trans-retinal, active rhodopsin is regenerated by binding of a fresh molecule of 11-cis-retinal.

It is found in the membrane. The protein resides in the cell projection. Its subcellular location is the cilium. It localises to the photoreceptor outer segment. In terms of biological role, photoreceptor required for image-forming vision at low light intensity. Required for photoreceptor cell viability after birth. Light-induced isomerization of 11-cis to all-trans retinal triggers a conformational change that activates signaling via G-proteins. Subsequent receptor phosphorylation mediates displacement of the bound G-protein alpha subunit by the arrestin SAG and terminates signaling. This Caluromys philander (Bare-tailed woolly opossum) protein is Rhodopsin (RHO).